The primary structure comprises 298 residues: Protein BZR1 homolog 1 (298 aa).

Disordered regions lie at residues 1-25, 71-129, 153-175, and 190-217; these read MTSGAAAAGRTPTWKERENNKRRER, GTTY…SPSR, VSSSAPVTPPLSSPTASRPPKIR, and AVSAPASPTRGRRLEHPDTIPECDESDV. A required for DNA-binding region spans residues 10-91; that stretch reads RTPTWKEREN…PSSAGGASVG (82 aa). Low complexity predominate over residues 96–128; sequence SSTQLLSAPSSSFPSPVPSYHASPASSSFPSPS. Serine 156 carries the phosphoserine modification. The tract at residues 204 to 224 is PEST-like; it reads EHPDTIPECDESDVSTVDSGR.

Belongs to the BZR/LAT61 family. As to quaternary structure, interacts with GF14C. Interacts with PUB24. Interacts with SMOS1. Post-translationally, phosphorylated on serine and threonine residues by GSK2. Dephosphorylated during response to brassinosteroid. In terms of processing, ubiquitinated by PUB24. Ubiquitination leads to its subsequent degradation by the 26S proteasome, thus reducing sensitivity to brassinosteroid signaling.

The protein resides in the nucleus. It is found in the cytoplasm. Positive brassinosteroid-signaling protein. Mediates downstream brassinosteroid-regulated growth response and feedback inhibition of brassinosteroid (BR) biosynthetic genes. May act as transcriptional repressor by binding the brassinosteroid-response element (BREE) (5'-CGTG(T/C)G-3') in the promoter of DLT (AC Q9LWU9), another positive regulator of BR signaling. Acts as a transcriptional repressor of LIC, a negative regulator of BR signaling, by binding to the BRRE element of its promoter. BZR1 and LIC play opposite roles in BR signaling and regulation of leaf bending. The sequence is that of Protein BZR1 homolog 1 from Oryza sativa subsp. japonica (Rice).